Consider the following 278-residue polypeptide: Pre-hexon-linking protein VIII (278 aa).

Positions 114 to 199 (SPSLLSGGAS…ILRYRRLGQQ (86 aa)) are excised as a propeptide.

It belongs to the adenoviridae hexon-linking protein family. As to quaternary structure, interacts with the peripentonal hexons as well as the hexons in the facets. Part of a complex composed of the core-capsid bridging protein, the endosome lysis protein VI and the hexon-linking protein VIII; these interactions bridge the virus core to the capsid. Cleaved by the viral protease during virion maturation. May cause the middle segment to be shed from the capsid.

It localises to the virion. Its subcellular location is the host nucleus. In terms of biological role, structural component of the virion that acts as a cement protein on the capsid interior and which glue the peripentonal hexons and group-of-nine hexons together. This chain is Pre-hexon-linking protein VIII, found in Pantherophis guttatus (Corn snake).